Here is a 339-residue protein sequence, read N- to C-terminus: MNDLTKKSVEELKKLEEESRAELFALRFQSAMGNLEKPHRIGELKNQIARILTILSARKNSGENTAINVKVNLNETYAKIEKESQAFAKQRKAKIEQMMAEQQAAEGKMANLMDLPVNDAMDLTEEQAVVSTPTGETNGLDEQKAPVAAKKPAAAKDFPKQKDVVEEKTATGKPAAPSAKKAPVAKKDVAQETKTDKDAALKALIKEKAAAKKPAAKSKTSTPSGKTTVTVKSVTSAKADIEVPKETSKPVPTKTVKKAAELNAKEKLVAIKSSVAMGGTAKEPGSGVKIDLELKAKDPNAKEYTYGTNWKENRDKILTASKTTKKADDKTTKKGTGKK.

A large ribosomal subunit protein uL29 region spans residues 1–96 (MNDLTKKSVE…FAKQRKAKIE (96 aa)). Residues 97 to 339 (QMMAEQQAAE…KTTKKGTGKK (243 aa)) form a unknown region. 2 disordered regions span residues 129-254 (VVST…VPTK) and 311-339 (KENR…TGKK). Positions 145–156 (APVAAKKPAAAK) are enriched in low complexity. Over residues 157–170 (DFPKQKDVVEEKTA) the composition is skewed to basic and acidic residues. Positions 171-182 (TGKPAAPSAKKA) are enriched in low complexity. Basic and acidic residues predominate over residues 185-210 (AKKDVAQETKTDKDAALKALIKEKAA). Over residues 217-238 (KSKTSTPSGKTTVTVKSVTSAK) the composition is skewed to low complexity. Residues 239-248 (ADIEVPKETS) show a composition bias toward basic and acidic residues.

It belongs to the universal ribosomal protein uL29 family. In terms of assembly, forms homomultimers. Part of the ribosome; radioactive IRS binds to purified ribosomes.

Its function is as follows. Specifically binds a DNA inverted repeat sequence (IRS) found downstream of rpsB in one of the ribosomal subunit operons (for genes rpsB, tsf, and unknown gene x). Might be involved in regulation of transcription of the rpsB operon; the IRS may be a control element to attenuate transcription. This chain is Large ribosomal subunit protein uL29, found in Spiroplasma citri.